Consider the following 217-residue polypeptide: MSSKVSRDTLYECVNAVLQASKDKKRNFLETVELQIGLKNYDPQKDKRFSGTVKLKYIPRPKMQVCVLGDQQHCDEAKSLTVPCMDAEALKKLNKNKKLVKKLAKKYDAFLASESLIKQIPRLLGPGLNKAGKFPGLLSHQESMTQKIDEVKATIKFQMKKVLCLSVAVGHVDMTPDELAQNVHLSINFLVSLLKKHWQNVRSLHMKSTMGPPPKLY.

It belongs to the universal ribosomal protein uL1 family.

The sequence is that of Large ribosomal subunit protein uL1 (RpL10A) from Spodoptera frugiperda (Fall armyworm).